Here is a 142-residue protein sequence, read N- to C-terminus: Membrane protein YneK (142 aa).

The chain crosses the membrane as a helical span at residues F6 to F26.

As to quaternary structure, interacts with the N-terminal D1 domain of dynamin-like protein DynA.

The protein localises to the cell membrane. The protein is Membrane protein YneK (yneK) of Bacillus subtilis (strain 168).